The chain runs to 275 residues: Autophagy protein 5 (275 aa).

M1 is modified (N-acetylmethionine). Residue K130 forms a Glycyl lysine isopeptide (Lys-Gly) (interchain with G-Cter in ATG12) linkage.

It belongs to the ATG5 family. As to quaternary structure, forms a conjugate with ATG12. Part of the minor complex composed of 4 sets of ATG12-ATG5 and ATG16L1 (400 kDa); this complex interacts with ATG3 leading to disruption of ATG7 interaction and promotion of ATG8-like proteins lipidation. Forms an 800-kDa complex composed of ATG12-ATG5 and ATG16L2. The ATG12-ATG5 conjugate interacts with RAB33A; this interaction is bridged by ATG16L1 and promotes ATG12-ATG5-ATG16L1 complex recruitment to phagophores. Interacts with TECPR1; the interaction is direct and does not take place when ATG16L1 is associated with the ATG5-ATG12 conjugate. Interacts with DHX58/RIG-1, IFIH1/MDA5 and MAVS/IPS-1 in monomeric form as well as in ATG12-ATG5 conjugate form. The interaction with MAVS is further enhanced upon vesicular stomatitis virus (VSV) infection. Interacts with ATG3. Interacts with ATG7 and ATG10. Interacts with FADD. Interacts with Bassoon/BSN; this interaction is important for the regulation of presynaptic autophagy. Interacts with ATG16L2. Post-translationally, conjugated to ATG12; which is essential for autophagy, but is not required for association with isolation membrane. In terms of processing, acetylated by EP300.

It is found in the cytoplasm. The protein resides in the preautophagosomal structure membrane. Functionally, involved in autophagic vesicle formation. Conjugation with ATG12, through a ubiquitin-like conjugating system involving ATG7 as an E1-like activating enzyme and ATG10 as an E2-like conjugating enzyme, is essential for its function. The ATG12-ATG5 conjugate acts as an E3-like enzyme which is required for lipidation of ATG8 family proteins and their association to the vesicle membranes. Involved in mitochondrial quality control after oxidative damage, and in subsequent cellular longevity. Plays a critical role in multiple aspects of lymphocyte development and is essential for both B and T lymphocyte survival and proliferation. Required for optimal processing and presentation of antigens for MHC II. Involved in the maintenance of axon morphology and membrane structures, as well as in normal adipocyte differentiation. Promotes primary ciliogenesis through removal of OFD1 from centriolar satellites and degradation of IFT20 via the autophagic pathway. As part of the ATG8 conjugation system with ATG12 and ATG16L1, required for recruitment of LRRK2 to stressed lysosomes and induction of LRRK2 kinase activity in response to lysosomal stress. May play an important role in the apoptotic process, possibly within the modified cytoskeleton. Its expression is a relatively late event in the apoptotic process, occurring downstream of caspase activity. Plays a crucial role in IFN-gamma-induced autophagic cell death by interacting with FADD. The chain is Autophagy protein 5 from Pongo abelii (Sumatran orangutan).